The primary structure comprises 363 residues: Peptide chain release factor 2 (363 aa).

Gln251 carries the post-translational modification N5-methylglutamine.

Belongs to the prokaryotic/mitochondrial release factor family. Methylated by PrmC. Methylation increases the termination efficiency of RF2.

Its subcellular location is the cytoplasm. Its function is as follows. Peptide chain release factor 2 directs the termination of translation in response to the peptide chain termination codons UGA and UAA. This is Peptide chain release factor 2 (prfB) from Helicobacter pylori (strain ATCC 700392 / 26695) (Campylobacter pylori).